Consider the following 304-residue polypeptide: Acetyl-coenzyme A carboxylase carboxyl transferase subunit beta (304 aa).

The region spanning 25–294 (LWIKCPETGE…KAIKRDTATE (270 aa)) is the CoA carboxyltransferase N-terminal domain.

This sequence belongs to the AccD/PCCB family. As to quaternary structure, acetyl-CoA carboxylase is a heterohexamer composed of biotin carboxyl carrier protein (AccB), biotin carboxylase (AccC) and two subunits each of ACCase subunit alpha (AccA) and ACCase subunit beta (AccD).

The protein resides in the cytoplasm. The catalysed reaction is N(6)-carboxybiotinyl-L-lysyl-[protein] + acetyl-CoA = N(6)-biotinyl-L-lysyl-[protein] + malonyl-CoA. It participates in lipid metabolism; malonyl-CoA biosynthesis; malonyl-CoA from acetyl-CoA: step 1/1. In terms of biological role, component of the acetyl coenzyme A carboxylase (ACC) complex. Biotin carboxylase (BC) catalyzes the carboxylation of biotin on its carrier protein (BCCP) and then the CO(2) group is transferred by the transcarboxylase to acetyl-CoA to form malonyl-CoA. This Sinorhizobium medicae (strain WSM419) (Ensifer medicae) protein is Acetyl-coenzyme A carboxylase carboxyl transferase subunit beta.